A 162-amino-acid polypeptide reads, in one-letter code: Interleukin-15 (162 aa).

An N-terminal signal peptide occupies residues 1 to 29 (MRISKPHLRSVSIQCYLCLLLNSHFLTEA). Residues 30-48 (GIHVFILGCFSAGLPKTEA) constitute a propeptide that is removed on maturation. Intrachain disulfides connect Cys-83/Cys-133 and Cys-90/Cys-136. Asn-127 carries an N-linked (GlcNAc...) asparagine glycan.

Belongs to the IL-15/IL-21 family.

The protein resides in the secreted. In terms of biological role, cytokine that plays a major role in the development of inflammatory and protective immune responses to microbial invaders and parasites by modulating immune cells of both the innate and adaptive immune systems. Stimulates the proliferation of natural killer cells, T-cells and B-cells and promotes the secretion of several cytokines. In monocytes, induces the production of IL8 and monocyte chemotactic protein 1/CCL2, two chemokines that attract neutrophils and monocytes respectively to sites of infection. Unlike most cytokines, which are secreted in soluble form, IL15 is expressed in association with its high affinity IL15RA on the surface of IL15-producing cells and delivers signals to target cells that express IL2RB and IL2RG receptor subunits. Binding to its receptor triggers the phosphorylation of JAK1 and JAK3 and the recruitment and subsequent phosphorylation of signal transducer and activator of transcription-3/STAT3 and STAT5. In mast cells, induces the rapid tyrosine phosphorylation of STAT6 and thereby controls mast cell survival and release of cytokines such as IL4. The sequence is that of Interleukin-15 (IL15) from Macaca thibetana (Pere David's macaque).